Reading from the N-terminus, the 261-residue chain is Tryptophan synthase alpha chain (261 aa).

Active-site proton acceptor residues include Glu-47 and Asp-58.

This sequence belongs to the TrpA family. Tetramer of two alpha and two beta chains.

It catalyses the reaction (1S,2R)-1-C-(indol-3-yl)glycerol 3-phosphate + L-serine = D-glyceraldehyde 3-phosphate + L-tryptophan + H2O. It functions in the pathway amino-acid biosynthesis; L-tryptophan biosynthesis; L-tryptophan from chorismate: step 5/5. The alpha subunit is responsible for the aldol cleavage of indoleglycerol phosphate to indole and glyceraldehyde 3-phosphate. The sequence is that of Tryptophan synthase alpha chain from Neisseria meningitidis serogroup B (strain ATCC BAA-335 / MC58).